We begin with the raw amino-acid sequence, 340 residues long: Phosphoribosylformylglycinamidine cyclo-ligase (340 aa).

It belongs to the AIR synthase family.

It localises to the cytoplasm. It catalyses the reaction 2-formamido-N(1)-(5-O-phospho-beta-D-ribosyl)acetamidine + ATP = 5-amino-1-(5-phospho-beta-D-ribosyl)imidazole + ADP + phosphate + H(+). It functions in the pathway purine metabolism; IMP biosynthesis via de novo pathway; 5-amino-1-(5-phospho-D-ribosyl)imidazole from N(2)-formyl-N(1)-(5-phospho-D-ribosyl)glycinamide: step 2/2. This chain is Phosphoribosylformylglycinamidine cyclo-ligase, found in Streptococcus agalactiae serotype III (strain NEM316).